A 337-amino-acid polypeptide reads, in one-letter code: Fructose-1,6-bisphosphatase class 1 (337 aa).

Mg(2+)-binding residues include Glu-94, Asp-116, Leu-118, and Asp-119. Substrate-binding positions include 119–122 (DGSS), Asn-210, and Lys-276. Glu-282 lines the Mg(2+) pocket.

The protein belongs to the FBPase class 1 family. Homotetramer. Requires Mg(2+) as cofactor.

It is found in the cytoplasm. The catalysed reaction is beta-D-fructose 1,6-bisphosphate + H2O = beta-D-fructose 6-phosphate + phosphate. It functions in the pathway carbohydrate biosynthesis; gluconeogenesis. The protein is Fructose-1,6-bisphosphatase class 1 of Burkholderia lata (strain ATCC 17760 / DSM 23089 / LMG 22485 / NCIMB 9086 / R18194 / 383).